A 342-amino-acid polypeptide reads, in one-letter code: BAG family molecular chaperone regulator 1 (342 aa).

The disordered stretch occupies residues 1–41; sequence MMKMMRNKPTNLPTAGMTNGGRGSGGGGGGGGRESGGRDLE. The span at 8–17 shows a compositional bias: polar residues; it reads KPTNLPTAGM. The span at 18–34 shows a compositional bias: gly residues; it reads TNGGRGSGGGGGGGGRE. The Ubiquitin-like domain maps to 65–141; it reads PMIRVRIKYG…MVLIEDPLSQ (77 aa). A BAG domain is found at 160-238; the sequence is AISDISLEVD…NYVETLDALK (79 aa). Ser-298 is subject to Phosphoserine.

Binds to the ATPase domain of HSP70/HSC70 chaperones.

In terms of biological role, co-chaperone that regulates diverse cellular pathways, such as programmed cell death and stress responses. The chain is BAG family molecular chaperone regulator 1 (BAG1) from Arabidopsis thaliana (Mouse-ear cress).